Here is a 232-residue protein sequence, read N- to C-terminus: Octanoyltransferase (232 aa).

The BPL/LPL catalytic domain maps to 44-219 (EYTADEIWVV…QLARQFGLVL (176 aa)). Substrate-binding positions include 83 to 90 (RGGQVTYH), 150 to 152 (ALG), and 163 to 165 (GLS). The active-site Acyl-thioester intermediate is cysteine 181.

It belongs to the LipB family.

The protein resides in the cytoplasm. The catalysed reaction is octanoyl-[ACP] + L-lysyl-[protein] = N(6)-octanoyl-L-lysyl-[protein] + holo-[ACP] + H(+). It participates in protein modification; protein lipoylation via endogenous pathway; protein N(6)-(lipoyl)lysine from octanoyl-[acyl-carrier-protein]: step 1/2. Its function is as follows. Catalyzes the transfer of endogenously produced octanoic acid from octanoyl-acyl-carrier-protein onto the lipoyl domains of lipoate-dependent enzymes. Lipoyl-ACP can also act as a substrate although octanoyl-ACP is likely to be the physiological substrate. The protein is Octanoyltransferase of Xanthomonas axonopodis pv. citri (strain 306).